The chain runs to 188 residues: Elongation factor P-like protein (188 aa).

This sequence belongs to the elongation factor P family.

The polypeptide is Elongation factor P-like protein (Stenotrophomonas maltophilia (strain K279a)).